The chain runs to 332 residues: Long form salivary protein D7L1 (332 aa).

An N-terminal signal peptide occupies residues 1-21; the sequence is MHSPKSFLLLAVVFVALRVTA. 2 cysteine pairs are disulfide-bonded: Cys-40–Cys-77 and Cys-73–Cys-133. Trp-61 is a leukotriene E4 binding site. Lys-176 contributes to the leukotriene E4 binding site. Disulfide bonds link Cys-184–Cys-219, Cys-200–Cys-331, and Cys-259–Cys-278. 2 residues coordinate noradrenaline: Glu-185 and Arg-203. The noradrenaline site is built by Asp-294 and Glu-297.

This sequence belongs to the PBP/GOBP family. Female mosquito salivary gland (at protein level).

The protein resides in the secreted. Functionally, modulates blood feeding of female mosquitoes on vertebrate species by binding and sequestering different mediators involved in the host response, such as biogenic amines and eicosanoids. Binds dopamine, serotonin, histamine, tryptamine, adrenaline, noradrenaline, leukotriene B4, leukotriene C4, leukotriene D4, leukotriene E4 and U-46619, a stable analog of thromboxane A2. Inhibits platelet aggregation induced by serotonin and low doses of thromboxane A2 analog U-46619 but not by high doses of U-46619, collagen or ADP. Prevents leukocyte recruitment. The protein is Long form salivary protein D7L1 of Aedes albopictus (Asian tiger mosquito).